Here is a 319-residue protein sequence, read N- to C-terminus: Phosphoenolpyruvate transferase (319 aa).

D50 contacts 7,8-didemethyl-8-hydroxy-5-deazariboflavin.

It belongs to the CofD family. Homodimer. Requires Mg(2+) as cofactor.

The catalysed reaction is enolpyruvoyl-2-diphospho-5'-guanosine + 7,8-didemethyl-8-hydroxy-5-deazariboflavin = dehydro coenzyme F420-0 + GMP + H(+). It participates in cofactor biosynthesis; coenzyme F420 biosynthesis. Catalyzes the transfer of the phosphoenolpyruvate moiety from enoylpyruvoyl-2-diphospho-5'-guanosine (EPPG) to 7,8-didemethyl-8-hydroxy-5-deazariboflavin (FO) with the formation of dehydro coenzyme F420-0 and GMP. The sequence is that of Phosphoenolpyruvate transferase from Streptomyces coelicolor (strain ATCC BAA-471 / A3(2) / M145).